A 131-amino-acid chain; its full sequence is Phosphoribosyl-AMP cyclohydrolase (131 aa).

Residue aspartate 89 coordinates Mg(2+). A Zn(2+)-binding site is contributed by cysteine 90. 2 residues coordinate Mg(2+): aspartate 91 and aspartate 93. Cysteine 106 and cysteine 113 together coordinate Zn(2+).

The protein belongs to the PRA-CH family. As to quaternary structure, homodimer. The cofactor is Mg(2+). Zn(2+) is required as a cofactor.

Its subcellular location is the cytoplasm. It catalyses the reaction 1-(5-phospho-beta-D-ribosyl)-5'-AMP + H2O = 1-(5-phospho-beta-D-ribosyl)-5-[(5-phospho-beta-D-ribosylamino)methylideneamino]imidazole-4-carboxamide. The protein operates within amino-acid biosynthesis; L-histidine biosynthesis; L-histidine from 5-phospho-alpha-D-ribose 1-diphosphate: step 3/9. In terms of biological role, catalyzes the hydrolysis of the adenine ring of phosphoribosyl-AMP. The protein is Phosphoribosyl-AMP cyclohydrolase of Bifidobacterium longum (strain DJO10A).